Reading from the N-terminus, the 539-residue chain is GMP synthase [glutamine-hydrolyzing] (539 aa).

Residues 4–202 form the Glutamine amidotransferase type-1 domain; the sequence is KVLILDFGSQ…VLEIAGAKPD (199 aa). Catalysis depends on Cys81, which acts as the Nucleophile. Active-site residues include His176 and Glu178. The 193-residue stretch at 203-395 folds into the GMPS ATP-PPase domain; the sequence is WVMRDHIDEA…LGLPHEMVYR (193 aa). 230 to 236 lines the ATP pocket; sequence SGGVDSS.

In terms of assembly, homodimer.

It catalyses the reaction XMP + L-glutamine + ATP + H2O = GMP + L-glutamate + AMP + diphosphate + 2 H(+). The protein operates within purine metabolism; GMP biosynthesis; GMP from XMP (L-Gln route): step 1/1. In terms of biological role, catalyzes the synthesis of GMP from XMP. The chain is GMP synthase [glutamine-hydrolyzing] from Ralstonia pickettii (strain 12J).